The chain runs to 378 residues: Decaprenyl-diphosphate synthase subunit 1 (378 aa).

3 residues coordinate isopentenyl diphosphate: lysine 72, arginine 75, and histidine 130. Residues aspartate 137 and aspartate 141 each coordinate Mg(2+). Arginine 147 is an isopentenyl diphosphate binding site.

The protein belongs to the FPP/GGPP synthase family. Heterotetramer of 2 dps1 and 2 dlp1 subunits. The cofactor is Mg(2+).

It is found in the mitochondrion. The enzyme catalyses 7 isopentenyl diphosphate + (2E,6E)-farnesyl diphosphate = all-trans-decaprenyl diphosphate + 7 diphosphate. It participates in cofactor biosynthesis; ubiquinone biosynthesis. Supplies decaprenyl diphosphate, the precursor for the side chain of the isoprenoid quinones ubiquinone-10. The protein is Decaprenyl-diphosphate synthase subunit 1 (dps1) of Schizosaccharomyces pombe (strain 972 / ATCC 24843) (Fission yeast).